Consider the following 201-residue polypeptide: Urease accessory protein UreG (201 aa).

GTP is bound at residue 12–19 (GPVGSGKT).

It belongs to the SIMIBI class G3E GTPase family. UreG subfamily. Homodimer. UreD, UreF and UreG form a complex that acts as a GTP-hydrolysis-dependent molecular chaperone, activating the urease apoprotein by helping to assemble the nickel containing metallocenter of UreC. The UreE protein probably delivers the nickel.

The protein resides in the cytoplasm. In terms of biological role, facilitates the functional incorporation of the urease nickel metallocenter. This process requires GTP hydrolysis, probably effectuated by UreG. The polypeptide is Urease accessory protein UreG (Dechloromonas aromatica (strain RCB)).